The primary structure comprises 234 residues: Uridylate kinase (234 aa).

Residue 9–12 participates in ATP binding; the sequence is KLSG. Gly51 is a UMP binding site. ATP contacts are provided by Gly52 and Arg56. UMP-binding positions include Asp71 and 132–139; that span reads CGNPFFTT. ATP contacts are provided by Thr159, Tyr165, and Asp168.

This sequence belongs to the UMP kinase family. Homohexamer.

The protein resides in the cytoplasm. The catalysed reaction is UMP + ATP = UDP + ADP. It participates in pyrimidine metabolism; CTP biosynthesis via de novo pathway; UDP from UMP (UMPK route): step 1/1. Its activity is regulated as follows. Inhibited by UTP. Catalyzes the reversible phosphorylation of UMP to UDP. The protein is Uridylate kinase of Prochlorococcus marinus subsp. pastoris (strain CCMP1986 / NIES-2087 / MED4).